Reading from the N-terminus, the 324-residue chain is o-succinylbenzoate synthase (324 aa).

Catalysis depends on Lys-135, which acts as the Proton donor. The Mg(2+) site is built by Asp-163, Glu-192, and Asp-215. The Proton acceptor role is filled by Lys-237.

The protein belongs to the mandelate racemase/muconate lactonizing enzyme family. MenC type 1 subfamily. A divalent metal cation serves as cofactor.

It catalyses the reaction (1R,6R)-6-hydroxy-2-succinyl-cyclohexa-2,4-diene-1-carboxylate = 2-succinylbenzoate + H2O. It functions in the pathway quinol/quinone metabolism; 1,4-dihydroxy-2-naphthoate biosynthesis; 1,4-dihydroxy-2-naphthoate from chorismate: step 4/7. It participates in quinol/quinone metabolism; menaquinone biosynthesis. Converts 2-succinyl-6-hydroxy-2,4-cyclohexadiene-1-carboxylate (SHCHC) to 2-succinylbenzoate (OSB). This is o-succinylbenzoate synthase from Aliivibrio fischeri (strain ATCC 700601 / ES114) (Vibrio fischeri).